The primary structure comprises 881 residues: DNA mismatch repair protein MutS (881 aa).

ATP is bound at residue 627-634 (GPNMGGKS).

This sequence belongs to the DNA mismatch repair MutS family.

Functionally, this protein is involved in the repair of mismatches in DNA. It is possible that it carries out the mismatch recognition step. This protein has a weak ATPase activity. The sequence is that of DNA mismatch repair protein MutS from Acinetobacter baumannii (strain AB307-0294).